We begin with the raw amino-acid sequence, 543 residues long: Efflux pump mokI (543 aa).

A run of 13 helical transmembrane segments spans residues 30 to 50 (LVVT…SIIV), 90 to 110 (LLTL…GSAL), 125 to 145 (AVAG…LASA), 153 to 173 (LLIG…PLLG), 185 to 205 (CFYI…AIHI), 233 to 253 (LLGF…LEWG), 261 to 281 (SSVI…FGFW), 307 to 327 (LFLG…PIYF), 340 to 360 (VYML…GAII), 364 to 384 (GYYI…AGLV), 394 to 416 (AAWV…TPII), 428 to 448 (ALGI…FLTL), and 509 to 529 (VGAS…GLIW).

This sequence belongs to the major facilitator superfamily. TCR/Tet family.

Its subcellular location is the membrane. Functionally, efflux pump; part of the gene cluster that mediates the biosynthesis of monakolin K, also known as lovastatin, and which acts as a potent competitive inhibitor of HMG-CoA reductase. The sequence is that of Efflux pump mokI from Monascus pilosus (Red mold).